Reading from the N-terminus, the 154-residue chain is 6,7-dimethyl-8-ribityllumazine synthase (154 aa).

5-amino-6-(D-ribitylamino)uracil is bound by residues phenylalanine 22, 56-58 (AFE), and 80-82 (AVI). 85 to 86 (ST) contributes to the (2S)-2-hydroxy-3-oxobutyl phosphate binding site. The active-site Proton donor is histidine 88. Position 113 (phenylalanine 113) interacts with 5-amino-6-(D-ribitylamino)uracil. (2S)-2-hydroxy-3-oxobutyl phosphate is bound at residue arginine 127.

It belongs to the DMRL synthase family.

It catalyses the reaction (2S)-2-hydroxy-3-oxobutyl phosphate + 5-amino-6-(D-ribitylamino)uracil = 6,7-dimethyl-8-(1-D-ribityl)lumazine + phosphate + 2 H2O + H(+). Its pathway is cofactor biosynthesis; riboflavin biosynthesis; riboflavin from 2-hydroxy-3-oxobutyl phosphate and 5-amino-6-(D-ribitylamino)uracil: step 1/2. In terms of biological role, catalyzes the formation of 6,7-dimethyl-8-ribityllumazine by condensation of 5-amino-6-(D-ribitylamino)uracil with 3,4-dihydroxy-2-butanone 4-phosphate. This is the penultimate step in the biosynthesis of riboflavin. In Clostridium beijerinckii (strain ATCC 51743 / NCIMB 8052) (Clostridium acetobutylicum), this protein is 6,7-dimethyl-8-ribityllumazine synthase.